We begin with the raw amino-acid sequence, 2338 residues long: Proto-oncogene tyrosine-protein kinase ROS (2338 aa).

The N-terminal stretch at 1-27 (MKRIRWLTPKPATFVVLGCVWISVAQG) is a signal peptide. The Extracellular segment spans residues 28–1853 (TILSSCLTSC…EDGFWITETS (1826 aa)). N-linked (GlcNAc...) asparagine glycosylation is found at asparagine 52 and asparagine 77. Fibronectin type-III domains follow at residues 110–205 (LPTA…VPET) and 206–294 (APFI…PSPA). 6 N-linked (GlcNAc...) asparagine glycosylation sites follow: asparagine 333, asparagine 361, asparagine 480, asparagine 623, asparagine 934, and asparagine 1010. Residues 566 to 666 (LPGHPQEVSV…EPSVGTTLVP (101 aa)) form the Fibronectin type-III 3 domain. Fibronectin type-III domains lie at 942–1037 (IPDS…SVPS) and 1038–1145 (APEN…TSEI). Asparagine 1298 carries an N-linked (GlcNAc...) asparagine glycan. Fibronectin type-III domains lie at 1440–1548 (VASN…TKSG), 1549–1648 (VPGA…VNMF), 1650–1743 (TPEK…TKAG), and 1744–1845 (VPSK…LVED). The N-linked (GlcNAc...) asparagine glycan is linked to asparagine 1675. Residues 1854 to 1874 (FILTIIVGIFLVATVPLTFVW) form a helical membrane-spanning segment. Residues 1875 to 2338 (HRSLKNHKAT…AHSGHGDVSE (464 aa)) lie on the Cytoplasmic side of the membrane. The Protein kinase domain maps to 1937 to 2210 (LSLRLLLGSG…YNIQDQLQLF (274 aa)). Residues 1943–1951 (LGSGAFGEV) and lysine 1972 contribute to the ATP site. Residue aspartate 2071 is the Proton acceptor of the active site. Residue tyrosine 2266 is modified to Phosphotyrosine; by autocatalysis. The segment at 2277-2314 (EDRYEGPLGSKESGLHDLKKDERQPADKDFCQQPQVAY) is disordered. The span at 2289–2306 (SGLHDLKKDERQPADKDF) shows a compositional bias: basic and acidic residues. Tyrosine 2325 bears the Phosphotyrosine; by autocatalysis mark.

This sequence belongs to the protein kinase superfamily. Tyr protein kinase family. Insulin receptor subfamily. In terms of assembly, interacts with PTPN11; may activate the PI3 kinase-mTOR signaling pathway. Interacts with VAV3; constitutive interaction mediating VAV3 phosphorylation. Interacts with PTPN6 (via SH2 1 domain); the interaction is direct and promotes ROS1 dephosphorylation. Phosphorylated. Probably autophosphorylates. Phosphorylation at Tyr-2266 is required for the interaction with PTPN6 that mediates ROS1 dephosphorylation. Phosphorylation at Tyr-2266 stimulates the kinase activity and the activation of the ERK1 signaling cascade. Phosphorylation at Tyr-2266 and/or Tyr-2325 recruits PTPN11. As to expression, expressed in heart, lung, kidney and testis.

It localises to the cell membrane. The enzyme catalyses L-tyrosyl-[protein] + ATP = O-phospho-L-tyrosyl-[protein] + ADP + H(+). With respect to regulation, inhibited by dephosphorylation by PTPN6. In terms of biological role, orphan receptor tyrosine kinase (RTK) that plays a role in epithelial cell differentiation and regionalization of the proximal epididymal epithelium. NELL2 is an endogenous ligand for ROS1. Upon endogenous stimulation by NELL2, ROS1 activates the intracellular signaling pathway and triggers epididymal epithelial differentiation and subsequent sperm maturation. May activate several downstream signaling pathways related to cell differentiation, proliferation, growth and survival including the PI3 kinase-mTOR signaling pathway. Mediates the phosphorylation of PTPN11, an activator of this pathway. May also phosphorylate and activate the transcription factor STAT3 to control anchorage-independent cell growth. Mediates the phosphorylation and the activation of VAV3, a guanine nucleotide exchange factor regulating cell morphology. May activate other downstream signaling proteins including AKT1, MAPK1, MAPK3, IRS1 and PLCG2. This chain is Proto-oncogene tyrosine-protein kinase ROS (Ros1), found in Rattus norvegicus (Rat).